Consider the following 126-residue polypeptide: Aspartate 1-decarboxylase (126 aa).

The active-site Schiff-base intermediate with substrate; via pyruvic acid is serine 25. At serine 25 the chain carries Pyruvic acid (Ser). Substrate is bound at residue threonine 57. The Proton donor role is filled by tyrosine 58. Position 73–75 (73–75 (GAA)) interacts with substrate.

Belongs to the PanD family. In terms of assembly, heterooctamer of four alpha and four beta subunits. It depends on pyruvate as a cofactor. Post-translationally, is synthesized initially as an inactive proenzyme, which is activated by self-cleavage at a specific serine bond to produce a beta-subunit with a hydroxyl group at its C-terminus and an alpha-subunit with a pyruvoyl group at its N-terminus.

It is found in the cytoplasm. The catalysed reaction is L-aspartate + H(+) = beta-alanine + CO2. The protein operates within cofactor biosynthesis; (R)-pantothenate biosynthesis; beta-alanine from L-aspartate: step 1/1. In terms of biological role, catalyzes the pyruvoyl-dependent decarboxylation of aspartate to produce beta-alanine. The sequence is that of Aspartate 1-decarboxylase from Yersinia pestis bv. Antiqua (strain Antiqua).